A 2267-amino-acid polypeptide reads, in one-letter code: Acetyl-CoA carboxylase 1 (2267 aa).

The Biotin carboxylation domain occupies 38–544 (PIHSVLVANN…HTGWLDSRIA (507 aa)). The ATP-grasp domain occupies 190–384 (PESCNSIPEE…AAQVVVGMGV (195 aa)). 216 to 273 (CQVVGYPAMIKASWGGGGKGIRKVHNDDEVRALFKQVQGEVPGSPIFIMKVASQSRHL) lines the ATP pocket. Mg(2+) contacts are provided by E339, E353, and N355. Mn(2+) is bound by residues E339, E353, and N355. The active site involves R357. A Biotinyl-binding domain is found at 671–745 (LQKEHDPSKL…QAADLIARLD (75 aa)). At K712 the chain carries N6-biotinyllysine. Residues 1502-1843 (PYKPLDAIDL…YVGGPLPIMK (342 aa)) form the CoA carboxyltransferase N-terminal domain. The carboxyltransferase stretch occupies residues 1502-2163 (PYKPLDAIDL…EDALAKEIRE (662 aa)). Residues R1752, K2053, and R2055 each contribute to the CoA site. The region spanning 1847–2163 (PPDRPVTYFP…EDALAKEIRE (317 aa)) is the CoA carboxyltransferase C-terminal domain.

Homodimer. Requires Mg(2+) as cofactor. Mn(2+) serves as cofactor. It depends on biotin as a cofactor.

It is found in the cytoplasm. Its subcellular location is the cytosol. The enzyme catalyses hydrogencarbonate + acetyl-CoA + ATP = malonyl-CoA + ADP + phosphate + H(+). The catalysed reaction is N(6)-biotinyl-L-lysyl-[protein] + hydrogencarbonate + ATP = N(6)-carboxybiotinyl-L-lysyl-[protein] + ADP + phosphate + H(+). It functions in the pathway lipid metabolism; malonyl-CoA biosynthesis; malonyl-CoA from acetyl-CoA: step 1/1. Its function is as follows. Multifunctional enzyme that catalyzes the carboxylation of acetyl-CoA, forming malonyl-CoA, which is used in the plastid for fatty acid synthesis and in the cytosol in various biosynthetic pathways including fatty acid elongation. This is Acetyl-CoA carboxylase 1 (ACC1) from Oryza sativa subsp. japonica (Rice).